Reading from the N-terminus, the 261-residue chain is Tryptophan synthase alpha chain (261 aa).

Active-site proton acceptor residues include Glu49 and Asp60.

Belongs to the TrpA family. Tetramer of two alpha and two beta chains.

It carries out the reaction (1S,2R)-1-C-(indol-3-yl)glycerol 3-phosphate + L-serine = D-glyceraldehyde 3-phosphate + L-tryptophan + H2O. The protein operates within amino-acid biosynthesis; L-tryptophan biosynthesis; L-tryptophan from chorismate: step 5/5. Functionally, the alpha subunit is responsible for the aldol cleavage of indoleglycerol phosphate to indole and glyceraldehyde 3-phosphate. The chain is Tryptophan synthase alpha chain from Leifsonia xyli subsp. xyli (strain CTCB07).